We begin with the raw amino-acid sequence, 563 residues long: Coiled-coil domain-containing protein 38 (563 aa).

Coiled-coil stretches lie at residues 129 to 212 (KRNT…KTEF), 384 to 415 (NIEFLLEQEEMLKANCVREEEKAAELQLRSRL), and 485 to 522 (ERMKQKERRQKFRDEKMREKQRHQEERLKAALEKAVAQ). Residues 521–550 (AQPKKKLGRRLVYHSKPPSANKQQLPLVNE) form a disordered region. Residues 523 to 533 (PKKKLGRRLVY) show a composition bias toward basic residues.

As to quaternary structure, interacts with CCDC42, CFAP53, IFT88 and ODF2. Interacts with CCDC146. Interacts with TEKT3. Interacts with ubiquitinated histone H2A.

The protein localises to the cytoplasm. It localises to the cytoskeleton. It is found in the microtubule organizing center. Its subcellular location is the centrosome. The protein resides in the perinuclear region. The protein localises to the cell projection. It localises to the cilium. It is found in the flagellum. In terms of biological role, essential for male fertility. Required for sperm flagellum biogenesis. Also required for acrosome biogenesis. Required for the attachment of developing acrosomes to the nucleus during spermiogenesis and may be involved in the transport of fibrous sheath components. The protein is Coiled-coil domain-containing protein 38 (CCDC38) of Macaca fascicularis (Crab-eating macaque).